Here is a 299-residue protein sequence, read N- to C-terminus: NAD kinase (299 aa).

Aspartate 64 serves as the catalytic Proton acceptor. Residues 64 to 65, 138 to 139, arginine 149, arginine 166, aspartate 168, 179 to 184, and glutamine 238 contribute to the NAD(+) site; these read DG, ND, and TGYAVS.

The protein belongs to the NAD kinase family. Requires a divalent metal cation as cofactor.

It is found in the cytoplasm. It carries out the reaction NAD(+) + ATP = ADP + NADP(+) + H(+). Functionally, involved in the regulation of the intracellular balance of NAD and NADP, and is a key enzyme in the biosynthesis of NADP. Catalyzes specifically the phosphorylation on 2'-hydroxyl of the adenosine moiety of NAD to yield NADP. This Nitratidesulfovibrio vulgaris (strain ATCC 29579 / DSM 644 / CCUG 34227 / NCIMB 8303 / VKM B-1760 / Hildenborough) (Desulfovibrio vulgaris) protein is NAD kinase.